Here is a 411-residue protein sequence, read N- to C-terminus: Na(+)/H(+) antiporter NhaA 2 (411 aa).

The next 10 membrane-spanning stretches (helical) occupy residues V18–V38, L59–L79, L97–I117, G127–G147, L167–L187, W218–L238, P261–S281, V297–I317, V338–I358, and I366–L386.

It belongs to the NhaA Na(+)/H(+) (TC 2.A.33) antiporter family.

It localises to the cell membrane. The enzyme catalyses Na(+)(in) + 2 H(+)(out) = Na(+)(out) + 2 H(+)(in). Its function is as follows. Na(+)/H(+) antiporter that extrudes sodium in exchange for external protons. This chain is Na(+)/H(+) antiporter NhaA 2, found in Rhodococcus jostii (strain RHA1).